We begin with the raw amino-acid sequence, 303 residues long: MAGMSLQHPWAFAFGLLGNIISFMTYLAPLPTFYRIYKSKSTQGFQSVPYVVALFSAMLWIYYALLKSDECLLITINSAGCVIETIYIAVYLVYAPKKAKMFTAKLLLLVNVGVFGLILLLTLLLSAGDRRIVVLGWVCVGFSVSVFVAPLSIIRLVVRTKSVEFMPFSLSFSLTISAVVWFLYGLLIKDKYVALPNVLGFSFGVIQMGLYAMYRNSTPKAVLTKEVEAATATGDDDHSAAGVKEHVVNIAKLSAAVDVVKTREVHPVDVESPPAEAPPEEDDKAAAATAAAVAGAGEKKVAA.

Topologically, residues 1-9 (MAGMSLQHP) are extracellular. The chain crosses the membrane as a helical span at residues 10–30 (WAFAFGLLGNIISFMTYLAPL). Residues 13–98 (AFGLLGNIIS…AVYLVYAPKK (86 aa)) form the MtN3/slv 1 domain. Residues 31 to 44 (PTFYRIYKSKSTQG) are Cytoplasmic-facing. The chain crosses the membrane as a helical span at residues 45 to 65 (FQSVPYVVALFSAMLWIYYAL). Residues 66 to 72 (LKSDECL) are Extracellular-facing. Residues 73 to 93 (LITINSAGCVIETIYIAVYLV) form a helical membrane-spanning segment. Over 94–105 (YAPKKAKMFTAK) the chain is Cytoplasmic. A helical membrane pass occupies residues 106–126 (LLLLVNVGVFGLILLLTLLLS). Topologically, residues 127 to 133 (AGDRRIV) are extracellular. Residues 134–154 (VLGWVCVGFSVSVFVAPLSII) form a helical membrane-spanning segment. The 84-residue stretch at 134-217 (VLGWVCVGFS…MGLYAMYRNS (84 aa)) folds into the MtN3/slv 2 domain. Over 155–167 (RLVVRTKSVEFMP) the chain is Cytoplasmic. Residues 168-188 (FSLSFSLTISAVVWFLYGLLI) form a helical membrane-spanning segment. Residues 189–192 (KDKY) are Extracellular-facing. The chain crosses the membrane as a helical span at residues 193-213 (VALPNVLGFSFGVIQMGLYAM). At 214–303 (YRNSTPKAVL…AGAGEKKVAA (90 aa)) the chain is on the cytoplasmic side. The disordered stretch occupies residues 266–290 (HPVDVESPPAEAPPEEDDKAAAATA).

This sequence belongs to the SWEET sugar transporter family. In terms of assembly, forms homooligomers and/or heterooligomers.

The protein localises to the cell membrane. Functionally, mediates both low-affinity uptake and efflux of sugar across the plasma membrane. In terms of biological role, confers blight susceptibility. Confers TAL effector-mediated susceptibility to Xanthomonas oryzae pv. oryzae. The protein is Bidirectional sugar transporter SWEET14 (SWEET14) of Oryza sativa subsp. japonica (Rice).